Reading from the N-terminus, the 186-residue chain is Casparian strip membrane protein 6 (186 aa).

Residues 1–23 (MKAGPIELGEGKSSAPKAAVNRG) are Cytoplasmic-facing. A helical membrane pass occupies residues 24–44 (VAILDFILRILAFIGTLGSAI). Over 45–73 (SMATTNETLPFFTQFIRFRAEYDDLPTFT) the chain is Extracellular. N50 carries N-linked (GlcNAc...) asparagine glycosylation. The chain crosses the membrane as a helical span at residues 74–94 (FFVVANGVVSAYLLFSLPFSI). Residues 95-106 (FNIVRSKAQNSR) lie on the Cytoplasmic side of the membrane. A helical transmembrane segment spans residues 107 to 127 (ILLIILDTAMLGLLSAGASAA). At 128–160 (AAIVYLAHQGNVRTNWSAICQQFNSFCERISGS) the chain is on the extracellular side. An N-linked (GlcNAc...) asparagine glycan is attached at N142. A helical transmembrane segment spans residues 161 to 181 (LIGSFIGVVVFILLISLSAVA). Topologically, residues 182–186 (LSRHK) are cytoplasmic.

It belongs to the Casparian strip membrane proteins (CASP) family. Homodimer and heterodimers.

The protein resides in the cell membrane. Functionally, regulates membrane-cell wall junctions and localized cell wall deposition. Required for establishment of the Casparian strip membrane domain (CSD) and the subsequent formation of Casparian strips, a cell wall modification of the root endodermis that determines an apoplastic barrier between the intraorganismal apoplasm and the extraorganismal apoplasm and prevents lateral diffusion. In Populus trichocarpa (Western balsam poplar), this protein is Casparian strip membrane protein 6.